The primary structure comprises 258 residues: Tetratricopeptide repeat protein 33 (258 aa).

TPR repeat units follow at residues 59–92, 93–126, and 127–160; these read SKRL…TPGD, AALY…NPHF, and VEAW…CPAN. Residues 231-258 form a disordered region; that stretch reads SASGSENLSDRKEDKVETNDSKEFIKAR. The span at 238–258 shows a compositional bias: basic and acidic residues; it reads LSDRKEDKVETNDSKEFIKAR.

The chain is Tetratricopeptide repeat protein 33 (ttc33) from Xenopus laevis (African clawed frog).